Reading from the N-terminus, the 900-residue chain is Bifunctional uridylyltransferase/uridylyl-removing enzyme (900 aa).

The tract at residues 1-342 (MPQVDPELFD…PCEQPVQIQP (342 aa)) is uridylyltransferase. Residues 343 to 705 (LNSRFQLRDG…TTQREFESGS (363 aa)) are uridylyl-removing. Residues 461 to 583 (VDAHTLNLIK…VGDQTHLDYL (123 aa)) enclose the HD domain. ACT domains lie at 706 to 789 (QIFI…IIQR) and 816 to 891 (VLEV…DNGR).

It belongs to the GlnD family. It depends on Mg(2+) as a cofactor.

It carries out the reaction [protein-PII]-L-tyrosine + UTP = [protein-PII]-uridylyl-L-tyrosine + diphosphate. The catalysed reaction is [protein-PII]-uridylyl-L-tyrosine + H2O = [protein-PII]-L-tyrosine + UMP + H(+). With respect to regulation, uridylyltransferase (UTase) activity is inhibited by glutamine, while glutamine activates uridylyl-removing (UR) activity. In terms of biological role, modifies, by uridylylation and deuridylylation, the PII regulatory proteins (GlnB and homologs), in response to the nitrogen status of the cell that GlnD senses through the glutamine level. Under low glutamine levels, catalyzes the conversion of the PII proteins and UTP to PII-UMP and PPi, while under higher glutamine levels, GlnD hydrolyzes PII-UMP to PII and UMP (deuridylylation). Thus, controls uridylylation state and activity of the PII proteins, and plays an important role in the regulation of nitrogen assimilation and metabolism. This chain is Bifunctional uridylyltransferase/uridylyl-removing enzyme, found in Pseudomonas aeruginosa (strain UCBPP-PA14).